The following is a 708-amino-acid chain: Alpha-galactosidase (708 aa).

The Nucleophile role is filled by aspartate 441. The Proton donor role is filled by aspartate 505.

Belongs to the glycosyl hydrolase 36 family. Homotetramer.

The catalysed reaction is Hydrolysis of terminal, non-reducing alpha-D-galactose residues in alpha-D-galactosides, including galactose oligosaccharides, galactomannans and galactolipids.. This Escherichia coli protein is Alpha-galactosidase (rafA).